Consider the following 1434-residue polypeptide: DNA-directed RNA polymerase subunit beta' (1434 aa).

Positions 70, 72, 85, and 88 each coordinate Zn(2+). Mg(2+)-binding residues include Asp460, Asp462, and Asp464. Cys840, Cys914, Cys921, and Cys924 together coordinate Zn(2+).

Belongs to the RNA polymerase beta' chain family. As to quaternary structure, the RNAP catalytic core consists of 2 alpha, 1 beta, 1 beta' and 1 omega subunit. When a sigma factor is associated with the core the holoenzyme is formed, which can initiate transcription. Mg(2+) serves as cofactor. The cofactor is Zn(2+).

It carries out the reaction RNA(n) + a ribonucleoside 5'-triphosphate = RNA(n+1) + diphosphate. Functionally, DNA-dependent RNA polymerase catalyzes the transcription of DNA into RNA using the four ribonucleoside triphosphates as substrates. The protein is DNA-directed RNA polymerase subunit beta' of Tolumonas auensis (strain DSM 9187 / NBRC 110442 / TA 4).